The following is a 1067-amino-acid chain: Ubiquitin carboxyl-terminal hydrolase 26 (1067 aa).

Positions 1 to 12 (MSRPNTRNKNKR) are enriched in basic residues. Positions 1–22 (MSRPNTRNKNKRQRPDAVDSSS) are disordered. Residues 106–442 (AGLTNLGATC…DAYMLMYSLR (337 aa)) enclose the USP domain. The active-site Nucleophile is the C115. Catalysis depends on H359, which acts as the Proton acceptor. Residues 385-418 (KRPCNEASSSTPQSESNGTASSGNITDGIQSGSS) are disordered. Over residues 390 to 418 (EASSSTPQSESNGTASSGNITDGIQSGSS) the composition is skewed to polar residues. 3 consecutive DUSP domains span residues 503-595 (NALT…GDYC), 610-711 (DSYR…DCTC), and 738-861 (TLKV…SAFI). The 84-residue stretch at 948–1031 (FEVDRRTSKR…LWVRDTEMHE (84 aa)) folds into the Ubiquitin-like domain.

The protein belongs to the peptidase C19 family. In terms of tissue distribution, expressed in seedlings, roots, stems, leaves and inflorescences.

Its subcellular location is the nucleus. It catalyses the reaction Thiol-dependent hydrolysis of ester, thioester, amide, peptide and isopeptide bonds formed by the C-terminal Gly of ubiquitin (a 76-residue protein attached to proteins as an intracellular targeting signal).. Recognizes and hydrolyzes the peptide bond at the C-terminal Gly of ubiquitin. Involved in the processing of poly-ubiquitin precursors as well as that of ubiquitinated proteins. Deubiquitinates H2BK143ub1 of histone H2B. This chain is Ubiquitin carboxyl-terminal hydrolase 26 (UBP26), found in Arabidopsis thaliana (Mouse-ear cress).